Reading from the N-terminus, the 434-residue chain is Enolase (434 aa).

Position 163 (glutamine 163) interacts with (2R)-2-phosphoglycerate. Glutamate 205 acts as the Proton donor in catalysis. Aspartate 242, glutamate 291, and aspartate 318 together coordinate Mg(2+). Positions 343, 372, 373, and 394 each coordinate (2R)-2-phosphoglycerate. The Proton acceptor role is filled by lysine 343.

It belongs to the enolase family. Requires Mg(2+) as cofactor.

The protein localises to the cytoplasm. It localises to the secreted. Its subcellular location is the cell surface. The enzyme catalyses (2R)-2-phosphoglycerate = phosphoenolpyruvate + H2O. It participates in carbohydrate degradation; glycolysis; pyruvate from D-glyceraldehyde 3-phosphate: step 4/5. Functionally, catalyzes the reversible conversion of 2-phosphoglycerate (2-PG) into phosphoenolpyruvate (PEP). It is essential for the degradation of carbohydrates via glycolysis. The chain is Enolase from Streptococcus thermophilus (strain CNRZ 1066).